The following is a 124-amino-acid chain: Con-Ins Tx1 (124 aa).

Positions 1-24 are cleaved as a signal peptide; sequence MTTSSYFLLVALGLLLYVFQSSFG. 4 disulfide bridges follow: cysteine 29–cysteine 107, cysteine 41–cysteine 110, cysteine 53–cysteine 123, and cysteine 109–cysteine 114. A 4-hydroxyproline; partial modification is found at proline 34. Positions 59–92 are cleaved as a propeptide — c peptide; the sequence is EQGGANNARANTGRTSSLMKRRGFLSLLKKRGKR. Position 118 is a 4-carboxyglutamate; partial (glutamate 118).

This sequence belongs to the insulin family. Heterodimer of A and B chains; disulfide-linked. Expressed by the venom gland.

It localises to the secreted. Functionally, this venom insulin facilitates prey capture by rapidly inducing hypoglycemic shock. Intraperitoneal injection of this peptide into zebrafish lowers blood glucose with the same potency than human insulin. In vivo, when applied to water, this peptide reduces overall locomotor activity of zebrafish larvae, observed as a significant decrease in the percentage of time spent swimming and movement frequency. This chain is Con-Ins Tx1, found in Conus textile (Cloth-of-gold cone).